Here is a 214-residue protein sequence, read N- to C-terminus: Ras-related protein RABH1c (214 aa).

Gly-16 to Thr-23 is a GTP binding site. The short motif at Tyr-38–Phe-46 is the Effector region element. GTP-binding positions include Asp-64–Gln-68, Asn-123–Asp-126, and Ser-153–Ala-154. Positions Thr-194 to Cys-214 are disordered. Residues Gln-202–Cys-214 are compositionally biased toward gly residues. S-geranylgeranyl cysteine attachment occurs at residues Cys-212 and Cys-214. Position 214 is a cysteine methyl ester (Cys-214).

The protein belongs to the small GTPase superfamily. Rab family. As to quaternary structure, interacts with the C-terminus of GC5, but not with GC3.

It is found in the golgi apparatus membrane. The protein localises to the cytoplasm. Its subcellular location is the cytosol. Its function is as follows. Protein transport. Regulator of membrane traffic from the Golgi apparatus towards the endoplasmic reticulum (ER). This Arabidopsis thaliana (Mouse-ear cress) protein is Ras-related protein RABH1c (RABH1C).